A 308-amino-acid chain; its full sequence is Glutaminase (308 aa).

Substrate-binding residues include Ser-66, Asn-117, Glu-161, Asn-168, Tyr-192, Tyr-244, and Val-262.

This sequence belongs to the glutaminase family. Homotetramer.

It catalyses the reaction L-glutamine + H2O = L-glutamate + NH4(+). The chain is Glutaminase from Yersinia pestis bv. Antiqua (strain Nepal516).